A 126-amino-acid chain; its full sequence is Large ribosomal subunit protein bL19 (126 aa).

Belongs to the bacterial ribosomal protein bL19 family.

This protein is located at the 30S-50S ribosomal subunit interface and may play a role in the structure and function of the aminoacyl-tRNA binding site. The polypeptide is Large ribosomal subunit protein bL19 (Nitrobacter winogradskyi (strain ATCC 25391 / DSM 10237 / CIP 104748 / NCIMB 11846 / Nb-255)).